The following is a 359-amino-acid chain: Photosystem II protein D1 1 (359 aa).

Transmembrane regions (helical) follow at residues 29-46 (YVGW…AATI), 118-133 (HFLI…EWEL), and 142-156 (WICV…AASA). H118 is a binding site for chlorophyll a. Y126 contacts pheophytin a. Positions 170 and 189 each coordinate [CaMn4O5] cluster. The chain crosses the membrane as a helical span at residues 197–218 (FHMLGVAGVFGGSLFSAMHGSL). H198 contributes to the chlorophyll a binding site. A quinone is bound by residues H215 and 264–265 (SF). Fe cation is bound at residue H215. H272 serves as a coordination point for Fe cation. Residues 274–288 (FLAAWPVVGIWFTAL) form a helical membrane-spanning segment. [CaMn4O5] cluster-binding residues include H332, E333, D342, and A344. A propeptide spanning residues 345–359 (AAESTPVALQAPAIG) is cleaved from the precursor.

This sequence belongs to the reaction center PufL/M/PsbA/D family. In terms of assembly, PSII is composed of 1 copy each of membrane proteins PsbA, PsbB, PsbC, PsbD, PsbE, PsbF, PsbH, PsbI, PsbJ, PsbK, PsbL, PsbM, PsbT, PsbX, PsbY, PsbZ, Psb30/Ycf12, peripheral proteins PsbO, CyanoQ (PsbQ), PsbU, PsbV and a large number of cofactors. It forms dimeric complexes. Requires The D1/D2 heterodimer binds P680, chlorophylls that are the primary electron donor of PSII, and subsequent electron acceptors. It shares a non-heme iron and each subunit binds pheophytin, quinone, additional chlorophylls, carotenoids and lipids. D1 provides most of the ligands for the Mn4-Ca-O5 cluster of the oxygen-evolving complex (OEC). There is also a Cl(-1) ion associated with D1 and D2, which is required for oxygen evolution. The PSII complex binds additional chlorophylls, carotenoids and specific lipids. as cofactor. In terms of processing, tyr-161 forms a radical intermediate that is referred to as redox-active TyrZ, YZ or Y-Z. Post-translationally, C-terminally processed by CtpA; processing is essential to allow assembly of the oxygen-evolving complex and thus photosynthetic growth.

The protein resides in the cellular thylakoid membrane. The enzyme catalyses 2 a plastoquinone + 4 hnu + 2 H2O = 2 a plastoquinol + O2. Functionally, photosystem II (PSII) is a light-driven water:plastoquinone oxidoreductase that uses light energy to abstract electrons from H(2)O, generating O(2) and a proton gradient subsequently used for ATP formation. It consists of a core antenna complex that captures photons, and an electron transfer chain that converts photonic excitation into a charge separation. The D1/D2 (PsbA/PsbD) reaction center heterodimer binds P680, the primary electron donor of PSII as well as several subsequent electron acceptors. This Synechococcus sp. (strain CC9605) protein is Photosystem II protein D1 1.